The chain runs to 338 residues: MSDIITLAIESSCDETAASVLKNGREVLSNIISTQIETHKKFGGVVPEVASRKHVENIDIVVQEALDKANIGFNDIDHIAVTYGPGLVGALLVGLSYAKALAYTLNIPLVGVNHIEGHLSANYIEHKDLKPPFITLIVSGGHTHLVEVKDYGKYEILGKTRDDASGEAFDKISRAMNLGYPGGPIIDNLAKNGNKHAIEFPRAYLEEDSYDFSFSGLKSSVLNYLNGKRMKNEEIVVEDVAASFQEAVVEVLSTKALKAVKDKGYNIITLSGGVASNSGLRAKITELAKDNGITVKYPPLILCTDNAAMIGCAGYYNFINGKTHDMSLNAVPNLKINQ.

Fe cation contacts are provided by histidine 114 and histidine 118. Residues isoleucine 137–glycine 141, aspartate 170, glycine 183, aspartate 187, and asparagine 277 each bind substrate. Residue aspartate 305 coordinates Fe cation.

The protein belongs to the KAE1 / TsaD family. The cofactor is Fe(2+).

Its subcellular location is the cytoplasm. It catalyses the reaction L-threonylcarbamoyladenylate + adenosine(37) in tRNA = N(6)-L-threonylcarbamoyladenosine(37) in tRNA + AMP + H(+). In terms of biological role, required for the formation of a threonylcarbamoyl group on adenosine at position 37 (t(6)A37) in tRNAs that read codons beginning with adenine. Is involved in the transfer of the threonylcarbamoyl moiety of threonylcarbamoyl-AMP (TC-AMP) to the N6 group of A37, together with TsaE and TsaB. TsaD likely plays a direct catalytic role in this reaction. The polypeptide is tRNA N6-adenosine threonylcarbamoyltransferase (Clostridioides difficile (strain 630) (Peptoclostridium difficile)).